The following is a 176-amino-acid chain: Small ribosomal subunit protein uS4 (176 aa).

An S4 RNA-binding domain is found at 104 to 166; it reads RRLQTIVYKK…PTSPFKQNPP (63 aa).

It belongs to the universal ribosomal protein uS4 family. In terms of assembly, part of the 30S ribosomal subunit. Contacts protein S5. The interaction surface between S4 and S5 is involved in control of translational fidelity.

Its function is as follows. One of the primary rRNA binding proteins, it binds directly to 16S rRNA where it nucleates assembly of the body of the 30S subunit. Functionally, with S5 and S12 plays an important role in translational accuracy. This chain is Small ribosomal subunit protein uS4 (rps4), found in Sulfolobus acidocaldarius (strain ATCC 33909 / DSM 639 / JCM 8929 / NBRC 15157 / NCIMB 11770).